The chain runs to 143 residues: Chorion class A protein Ld5 (143 aa).

An N-terminal signal peptide occupies residues 1 to 21 (MNSFALLLVCIQACLVQSVFS).

This sequence belongs to the chorion protein family.

Its function is as follows. This protein is one of many from the eggshell of the gypsy moth. The chain is Chorion class A protein Ld5 from Lymantria dispar (Gypsy moth).